A 162-amino-acid polypeptide reads, in one-letter code: Phosphopantetheine adenylyltransferase (162 aa).

Substrate is bound at residue Ser-9. Residues 9–10 (SF) and His-17 contribute to the ATP site. Lys-41, Thr-73, and Arg-87 together coordinate substrate. ATP contacts are provided by residues 88-90 (GLR), Glu-98, and 122-128 (NQNISSS).

This sequence belongs to the bacterial CoaD family. Homohexamer. Requires Mg(2+) as cofactor.

The protein resides in the cytoplasm. The enzyme catalyses (R)-4'-phosphopantetheine + ATP + H(+) = 3'-dephospho-CoA + diphosphate. It participates in cofactor biosynthesis; coenzyme A biosynthesis; CoA from (R)-pantothenate: step 4/5. In terms of biological role, reversibly transfers an adenylyl group from ATP to 4'-phosphopantetheine, yielding dephospho-CoA (dPCoA) and pyrophosphate. The chain is Phosphopantetheine adenylyltransferase from Leuconostoc mesenteroides subsp. mesenteroides (strain ATCC 8293 / DSM 20343 / BCRC 11652 / CCM 1803 / JCM 6124 / NCDO 523 / NBRC 100496 / NCIMB 8023 / NCTC 12954 / NRRL B-1118 / 37Y).